The sequence spans 926 residues: Beta-mannosidase A (926 aa).

The N-terminal stretch at 1-21 (MHVKAETVLALLTPAPPSVVG) is a signal peptide. Asparagine 40, asparagine 242, asparagine 277, asparagine 311, and asparagine 342 each carry an N-linked (GlcNAc...) asparagine glycan. The Proton donor role is filled by glutamate 474. Asparagine 532, asparagine 603, asparagine 626, asparagine 653, asparagine 733, asparagine 756, asparagine 785, asparagine 793, asparagine 819, and asparagine 905 each carry an N-linked (GlcNAc...) asparagine glycan.

The protein belongs to the glycosyl hydrolase 2 family. Beta-mannosidase A subfamily. Homodimer.

The protein resides in the secreted. It carries out the reaction Hydrolysis of terminal, non-reducing beta-D-mannose residues in beta-D-mannosides.. It functions in the pathway glycan metabolism; N-glycan degradation. Its function is as follows. Exoglycosidase that cleaves the single beta-linked mannose residue from the non-reducing end of beta-mannosidic oligosaccharides of various complexity and length. Involved in the degradation of polymeric mannan and galactomannan. This chain is Beta-mannosidase A (mndA), found in Aspergillus fumigatus (strain ATCC MYA-4609 / CBS 101355 / FGSC A1100 / Af293) (Neosartorya fumigata).